The following is an 83-amino-acid chain: ATP synthase subunit c (83 aa).

Transmembrane regions (helical) follow at residues 10–30 (IAVA…FGLL) and 52–72 (MFIV…IALF).

This sequence belongs to the ATPase C chain family. As to quaternary structure, F-type ATPases have 2 components, F(1) - the catalytic core - and F(0) - the membrane proton channel. F(1) has five subunits: alpha(3), beta(3), gamma(1), delta(1), epsilon(1). F(0) has three main subunits: a(1), b(2) and c(10-14). The alpha and beta chains form an alternating ring which encloses part of the gamma chain. F(1) is attached to F(0) by a central stalk formed by the gamma and epsilon chains, while a peripheral stalk is formed by the delta and b chains.

It is found in the cell inner membrane. Its function is as follows. F(1)F(0) ATP synthase produces ATP from ADP in the presence of a proton or sodium gradient. F-type ATPases consist of two structural domains, F(1) containing the extramembraneous catalytic core and F(0) containing the membrane proton channel, linked together by a central stalk and a peripheral stalk. During catalysis, ATP synthesis in the catalytic domain of F(1) is coupled via a rotary mechanism of the central stalk subunits to proton translocation. Functionally, key component of the F(0) channel; it plays a direct role in translocation across the membrane. A homomeric c-ring of between 10-14 subunits forms the central stalk rotor element with the F(1) delta and epsilon subunits. In Shewanella loihica (strain ATCC BAA-1088 / PV-4), this protein is ATP synthase subunit c.